The following is a 309-amino-acid chain: Homoserine kinase (309 aa).

An ATP-binding site is contributed by 91–101 (PIGSGLGSSAC).

This sequence belongs to the GHMP kinase family. Homoserine kinase subfamily.

It is found in the cytoplasm. It carries out the reaction L-homoserine + ATP = O-phospho-L-homoserine + ADP + H(+). Its pathway is amino-acid biosynthesis; L-threonine biosynthesis; L-threonine from L-aspartate: step 4/5. Catalyzes the ATP-dependent phosphorylation of L-homoserine to L-homoserine phosphate. The chain is Homoserine kinase from Salmonella paratyphi B (strain ATCC BAA-1250 / SPB7).